A 470-amino-acid polypeptide reads, in one-letter code: 6-phospho-beta-galactosidase 1 (470 aa).

Residues Gln-23, His-120, Asn-163, Glu-164, and Asn-300 each contribute to the D-galactose 6-phosphate site. Glu-164 acts as the Proton donor in catalysis. The Nucleophile role is filled by Glu-378. Residues Ser-434, Trp-435, Lys-441, and Tyr-443 each coordinate D-galactose 6-phosphate.

This sequence belongs to the glycosyl hydrolase 1 family.

It catalyses the reaction a 6-phospho-beta-D-galactoside + H2O = D-galactose 6-phosphate + an alcohol. It participates in carbohydrate metabolism; lactose degradation; D-galactose 6-phosphate and beta-D-glucose from lactose 6-phosphate: step 1/1. In Streptococcus pneumoniae serotype 4 (strain ATCC BAA-334 / TIGR4), this protein is 6-phospho-beta-galactosidase 1.